A 413-amino-acid chain; its full sequence is Serine/threonine transporter SstT (413 aa).

The next 9 membrane-spanning stretches (helical) occupy residues isoleucine 11–alanine 31, phenylalanine 43–leucine 63, isoleucine 82–phenylalanine 102, alanine 141–methionine 161, isoleucine 192–glycine 212, leucine 216–valine 236, methionine 298–isoleucine 318, alanine 339–isoleucine 359, and valine 363–threonine 383.

The protein belongs to the dicarboxylate/amino acid:cation symporter (DAACS) (TC 2.A.23) family.

The protein localises to the cell inner membrane. It carries out the reaction L-serine(in) + Na(+)(in) = L-serine(out) + Na(+)(out). The catalysed reaction is L-threonine(in) + Na(+)(in) = L-threonine(out) + Na(+)(out). In terms of biological role, involved in the import of serine and threonine into the cell, with the concomitant import of sodium (symport system). This chain is Serine/threonine transporter SstT, found in Shewanella frigidimarina (strain NCIMB 400).